The chain runs to 175 residues: Lactobacillus up-regulated protein (175 aa).

The N-terminal stretch at 1–18 (MRSIFLAVLGLMATSSLA) is a signal peptide. N59 carries an N-linked (GlcNAc...) asparagine glycan.

The sequence is that of Lactobacillus up-regulated protein (lbuA) from Emericella nidulans (strain FGSC A4 / ATCC 38163 / CBS 112.46 / NRRL 194 / M139) (Aspergillus nidulans).